Consider the following 371-residue polypeptide: Histidinol-phosphate aminotransferase (371 aa).

Lys-228 is modified (N6-(pyridoxal phosphate)lysine).

This sequence belongs to the class-II pyridoxal-phosphate-dependent aminotransferase family. Histidinol-phosphate aminotransferase subfamily. Pyridoxal 5'-phosphate is required as a cofactor.

It carries out the reaction L-histidinol phosphate + 2-oxoglutarate = 3-(imidazol-4-yl)-2-oxopropyl phosphate + L-glutamate. It functions in the pathway amino-acid biosynthesis; L-histidine biosynthesis; L-histidine from 5-phospho-alpha-D-ribose 1-diphosphate: step 7/9. The protein is Histidinol-phosphate aminotransferase of Methanococcus maripaludis (strain C7 / ATCC BAA-1331).